The chain runs to 1158 residues: MATRKDTEEEQVVPSEEDEANVRAVQAHYLRSPSPSQYSMVSDAETESIFMEPIHLSSAIAAKQIINEELKPPGVRADAECPGMLESAEQLLVEDLYNRVREKMDDTSLYNTPCVLDLQRALVQDRQEAPWNEVDEVWPNVFIAEKSVAVNKGRLKRLGITHILNAAHGTGVYTGPEFYTGLEIQYLGVEVDDFPEVDISQHFRKASEFLDEALLTYRGKVLVSSEMGISRSAVLVVAYLMIFHNMAILEALMTVRKKRAIYPNEGFLKQLRELNEKLMEEREEDYGREGGSAEAEEGEGTGSMLGARVHALTVEEEDDSASHLSGSSLGKATQASKPLTLIDEEEEEKLYEQWKKGQGLLSDKVPQDGGGWRSASSGQGGEELEDEDVERIIQEWQSRNERYQAEGYRRWGREEEKEEESDAGSSVGRRRRTLSESSAWESVSSHDIWVLKQQLELNRPDHGRRRRADSMSSESTWDAWNERLLEIEKEASRRYHAKSKREEAADRSSEAGSRVREDDEDSVGSEASSFYNFCSRNKDKLTALERWKIKRIQFGFHKKDLGAGDSSGEPGAEEAVGEKNPSDVSLTAYQAWKLKHQKKVGSENKEEVVELSKGEDSALAKKRQRRLELLERSRQTLEESQSMASWEADSSTASGSIPLSAFWSADPSVSADGDTTSVLSTQSHRSHLSQAASNIAGCSTSNPTTPLPNLPVGPGDTISIASIQNWIANVVSETLAQKQNEMLLLSRSPSVASMKAVPAASCLGDDQVSMLSGHSSSSLGGCLLPQSQARPSSDMQSVLSCNTTLSSPAESCRSKVRGTSKPIFSLFADNVDLKELGRKEKEMQMELREKMSEYKMEKLASDNKRSSLFKKKKVKEDEDDGVGDGDEDTDSAIGSFRYSSRSNSQKPETDTCSSLAVCDHYASGSRVGKEMDSSINKWLSGLRTEEKPPFQSDWSGSSRGKYTRSSLLRETESKSSSYKFSKSQSEEQDTSSYHEANGNSVRSTSRFSSSSTREGREMHKFSRSTYNETSSSREESPEPYFFRRTPESSEREESPEPQRPNWARSRDWEDVEESSKSDFSEFGAKRKFTQSFMRSEEEGEKERTENREEGRFASGRRSQYRRSTDREEEEEMDDEAIIAAWRRRQEETRTKLQKRRED.

10 disordered regions span residues 1 to 21, 280 to 303, 315 to 337, 360 to 392, 407 to 444, 492 to 527, 559 to 582, 597 to 622, 873 to 915, and 940 to 1135; these read MATR…DEAN, EERE…GTGS, EEED…QASK, LLSD…VERI, GYRR…ESVS, SRRY…GSEA, KDLG…KNPS, QKKV…LAKK, KVKE…CSSL, and SGLR…MDDE. Residues 8–19 show a composition bias toward acidic residues; sequence EEEQVVPSEEDE. Residues 132–280 form the Tyrosine-protein phosphatase domain; it reads NEVDEVWPNV…LRELNEKLME (149 aa). Over residues 322-337 the composition is skewed to polar residues; sequence SHLSGSSLGKATQASK. Ser-377 bears the Phosphoserine mark. Phosphothreonine is present on Thr-433. Residues 435 to 444 show a composition bias toward low complexity; sequence SESSAWESVS. Basic and acidic residues predominate over residues 500 to 517; it reads KREEAADRSSEAGSRVRE. Ser-509 is subject to Phosphoserine. The span at 600–619 shows a compositional bias: basic and acidic residues; it reads VGSENKEEVVELSKGEDSAL. The span at 877–890 shows a compositional bias: acidic residues; that stretch reads DEDDGVGDGDEDTD. Composition is skewed to polar residues over residues 897 to 914 and 952 to 966; these read RYSS…TCSS and SDWS…TRSS. Positions 974 to 983 are enriched in low complexity; that stretch reads KSSSYKFSKS. Phosphoserine is present on Ser-985. Positions 990–999 are enriched in polar residues; sequence TSSYHEANGN. The segment covering 1000–1012 has biased composition (low complexity); that stretch reads SVRSTSRFSSSST. Position 1036 is a phosphoserine (Ser-1036). 3 stretches are compositionally biased toward basic and acidic residues: residues 1044-1056, 1064-1079, and 1094-1111; these read RTPE…ESPE, RSRD…KSDF, and RSEE…EEGR. A compositionally biased stretch (acidic residues) spans 1126–1135; sequence REEEEEMDDE.

It belongs to the protein-tyrosine phosphatase family. Non-receptor class dual specificity subfamily.

It localises to the cytoplasm. Its subcellular location is the myofibril. The protein localises to the sarcomere. In terms of biological role, may be required for myofiber maturation. The protein is Serine/threonine/tyrosine-interacting-like protein 2 of Homo sapiens (Human).